The following is a 562-amino-acid chain: Glucocorticoid modulatory element-binding protein 1 (562 aa).

The residue at position 2 (Ala-2) is an N-acetylalanine. The SAND domain occupies 72 to 156 (ASSIEGNEDM…RKMMDSGQID (85 aa)). Cys-103 contributes to the Zn(2+) binding site. 4 residues coordinate DNA: Lys-129, Lys-133, Lys-136, and Arg-147. His-160, Cys-164, and Cys-168 together coordinate Zn(2+). A coiled-coil region spans residues 311 to 355 (LDNRRKQVEQGEEQFLYTLADLERQLEEQKKQAQDPRLKSQTVQN). Residues 360–384 (PVSTPKPPKRPRLQRPASTTVLSPS) are disordered. The segment covering 375 to 384 (PASTTVLSPS) has biased composition (polar residues).

As to quaternary structure, homodimer, and heterodimer of GMEB1 and GMEB2. Interacts with TRIM63. Interacts with the glucocorticoid receptor (NR3C1) and NCOA2/TIF2. May interact with HSP27 and CREB-binding protein (CBP). As to expression, ubiquitous. Low levels were detected in heart, brain, spleen, lung, liver, skeletal muscle, kidney and testis.

It localises to the nucleus. The protein localises to the cytoplasm. Functionally, trans-acting factor that binds to glucocorticoid modulatory elements (GME) present in the TAT (tyrosine aminotransferase) promoter and increases sensitivity to low concentrations of glucocorticoids. Also binds to the transferrin receptor promoter. The sequence is that of Glucocorticoid modulatory element-binding protein 1 (Gmeb1) from Mus musculus (Mouse).